Here is a 267-residue protein sequence, read N- to C-terminus: 4-hydroxy-tetrahydrodipicolinate reductase (267 aa).

An NAD(+)-binding site is contributed by 8-13 (GASGRM). Arginine 35 is a binding site for NADP(+). Residues 98-100 (GTT) and 122-125 (APNM) each bind NAD(+). Histidine 155 serves as the catalytic Proton donor/acceptor. Histidine 156 lines the (S)-2,3,4,5-tetrahydrodipicolinate pocket. The active-site Proton donor is lysine 159. 165–166 (GT) contacts (S)-2,3,4,5-tetrahydrodipicolinate.

This sequence belongs to the DapB family.

It is found in the cytoplasm. It carries out the reaction (S)-2,3,4,5-tetrahydrodipicolinate + NAD(+) + H2O = (2S,4S)-4-hydroxy-2,3,4,5-tetrahydrodipicolinate + NADH + H(+). It catalyses the reaction (S)-2,3,4,5-tetrahydrodipicolinate + NADP(+) + H2O = (2S,4S)-4-hydroxy-2,3,4,5-tetrahydrodipicolinate + NADPH + H(+). It functions in the pathway amino-acid biosynthesis; L-lysine biosynthesis via DAP pathway; (S)-tetrahydrodipicolinate from L-aspartate: step 4/4. Catalyzes the conversion of 4-hydroxy-tetrahydrodipicolinate (HTPA) to tetrahydrodipicolinate. This chain is 4-hydroxy-tetrahydrodipicolinate reductase, found in Hahella chejuensis (strain KCTC 2396).